A 606-amino-acid polypeptide reads, in one-letter code: Ubiquitin-like modifier-activating enzyme ATG7 (606 aa).

A GXGXXG motif motif is present at residues 316-321 (GSGTLG). C488 (glycyl thioester intermediate) is an active-site residue. The tract at residues 567–606 (ALDDYKCVEKLSGLSKVQEEAELALEEDFDFSEDDEFVTG) is homodimerization.

Belongs to the ATG7 family. As to quaternary structure, homodimer. Interacts with ATG8 through a thioester bond between Cys-488 and the C-terminal Gly of ATG8 and with ATG12 through a thioester bond between Cys-488 and the C-terminal Gly of ATG12. Also interacts with ATG3.

The protein resides in the cytoplasm. Its subcellular location is the preautophagosomal structure. Functionally, E1-like activating enzyme involved in the 2 ubiquitin-like systems required for cytoplasm to vacuole transport (Cvt) and autophagy. Activates ATG12 for its conjugation with ATG5 and ATG8 for its conjugation with phosphatidylethanolamine. Both systems are needed for the ATG8 association to Cvt vesicles and autophagosomes membranes. Autophagy is essential for maintenance of amino acid levels and protein synthesis under nitrogen starvation. Required for selective autophagic degradation of the nucleus (nucleophagy) as well as for mitophagy which contributes to regulate mitochondrial quantity and quality by eliminating the mitochondria to a basal level to fulfill cellular energy requirements and preventing excess ROS production. In Kluyveromyces marxianus (strain DMKU3-1042 / BCC 29191 / NBRC 104275) (Yeast), this protein is Ubiquitin-like modifier-activating enzyme ATG7.